The chain runs to 428 residues: Serine--tRNA ligase (428 aa).

235 to 237 is an L-serine binding site; sequence TAE. 266 to 268 provides a ligand contact to ATP; sequence RSE. Position 289 (E289) interacts with L-serine. 353–356 contributes to the ATP binding site; the sequence is EISS. S389 contacts L-serine.

It belongs to the class-II aminoacyl-tRNA synthetase family. Type-1 seryl-tRNA synthetase subfamily. Homodimer. The tRNA molecule binds across the dimer.

It is found in the cytoplasm. The catalysed reaction is tRNA(Ser) + L-serine + ATP = L-seryl-tRNA(Ser) + AMP + diphosphate + H(+). The enzyme catalyses tRNA(Sec) + L-serine + ATP = L-seryl-tRNA(Sec) + AMP + diphosphate + H(+). Its pathway is aminoacyl-tRNA biosynthesis; selenocysteinyl-tRNA(Sec) biosynthesis; L-seryl-tRNA(Sec) from L-serine and tRNA(Sec): step 1/1. In terms of biological role, catalyzes the attachment of serine to tRNA(Ser). Is also able to aminoacylate tRNA(Sec) with serine, to form the misacylated tRNA L-seryl-tRNA(Sec), which will be further converted into selenocysteinyl-tRNA(Sec). The protein is Serine--tRNA ligase of Shewanella pealeana (strain ATCC 700345 / ANG-SQ1).